Reading from the N-terminus, the 332-residue chain is Phosphoenolpyruvate transferase (332 aa).

Residue Asp63 participates in 7,8-didemethyl-8-hydroxy-5-deazariboflavin binding.

Belongs to the CofD family. As to quaternary structure, homodimer. It depends on Mg(2+) as a cofactor.

It catalyses the reaction enolpyruvoyl-2-diphospho-5'-guanosine + 7,8-didemethyl-8-hydroxy-5-deazariboflavin = dehydro coenzyme F420-0 + GMP + H(+). The protein operates within cofactor biosynthesis; coenzyme F420 biosynthesis. Functionally, catalyzes the transfer of the phosphoenolpyruvate moiety from enoylpyruvoyl-2-diphospho-5'-guanosine (EPPG) to 7,8-didemethyl-8-hydroxy-5-deazariboflavin (FO) with the formation of dehydro coenzyme F420-0 and GMP. The protein is Phosphoenolpyruvate transferase of Nocardia farcinica (strain IFM 10152).